A 239-amino-acid chain; its full sequence is Interleukin-27 subunit alpha (239 aa).

An N-terminal signal peptide occupies residues 1–28 (MGQMADDLGWRLSLLLLSLLLARAGVWG). N-linked (GlcNAc...) asparagine glycosylation occurs at N89. The interval 167–186 (EEENEAGRELLPGAPGGPSK) is disordered.

It belongs to the IL-6 superfamily. Heterodimer with EBI3; not disulfide-linked. This heterodimer is known as interleukin IL-27. Post-translationally, O-glycosylated.

Its subcellular location is the secreted. In terms of biological role, associates with EBI3 to form the IL-27 interleukin, a heterodimeric cytokine which functions in innate immunity. Cytokine with pro- and anti-inflammatory properties, that can regulate T-helper cell development, suppress T-cell proliferation, stimulate cytotoxic T-cell activity, induce isotype switching in B-cells, and that has diverse effects on innate immune cells. Among its target cells are CD4 T-helper cells which can differentiate in type 1 effector cells (TH1), type 2 effector cells (TH2) and IL17 producing helper T-cells (TH17). It drives rapid clonal expansion of naive but not memory CD4 T-cells. It also strongly synergizes with IL-12 to trigger interferon-gamma/IFN-gamma production of naive CD4 T-cells, binds to the cytokine receptor WSX-1/TCCR which appears to be required but not sufficient for IL-27-mediated signal transduction. IL-27 potentiate the early phase of TH1 response and suppress TH2 and TH17 differentiation. It induces the differentiation of TH1 cells via two distinct pathways, p38 MAPK/TBX21- and ICAM1/ITGAL/ERK-dependent pathways. It also induces STAT1, STAT3, STAT4 and STAT5 phosphorylation and activates TBX21/T-Bet via STAT1 with resulting IL12RB2 up-regulation, an event crucial to TH1 cell commitment. It suppresses the expression of GATA3, the inhibitor TH1 cells development. In CD8 T-cells, it activates STATs as well as GZMB. IL-27 reveals to be a potent inhibitor of TH17 cell development and of IL-17 production. Indeed IL27 alone is also able to inhibit the production of IL17 by CD4 and CD8 T-cells. While IL-27 suppressed the development of pro-inflammatory Th17 cells via STAT1, it inhibits the development of anti-inflammatory inducible regulatory T-cells, iTreg, independently of STAT1. IL-27 also has an effect on cytokine production, it suppresses pro-inflammatory cytokine production such as IL2, IL4, IL5 and IL6 and activates suppressors of cytokine signaling such as SOCS1 and SOCS3. Apart from suppression of cytokine production, IL-27 also antagonizes the effects of some cytokines such as IL6 through direct effects on T-cells. Another important role of IL-27 is its antitumor activity as well as its antiangiogenic activity with activation of production of antiangiogenic chemokines such as IP-10/CXCL10 and MIG/CXCL9. In vein endothelial cells, it induces IRF1/interferon regulatory factor 1 and increase the expression of MHC class II transactivator/CIITA with resulting up-regulation of major histocompatibility complex class II. This Sus scrofa (Pig) protein is Interleukin-27 subunit alpha (IL27).